The primary structure comprises 199 residues: Urease accessory protein UreG (199 aa).

A GTP-binding site is contributed by 8–15 (GPVGSGKT).

Belongs to the SIMIBI class G3E GTPase family. UreG subfamily. In terms of assembly, homodimer. UreH, UreF and UreG form a complex that acts as a GTP-hydrolysis-dependent molecular chaperone, activating the urease apoprotein by helping to assemble the nickel containing metallocenter of UreC. The UreE protein probably delivers the nickel.

The protein localises to the cytoplasm. Its function is as follows. Facilitates the functional incorporation of the urease nickel metallocenter. This process requires GTP hydrolysis, probably effectuated by UreG. This chain is Urease accessory protein UreG, found in Helicobacter pylori (strain G27).